Consider the following 173-residue polypeptide: Crossover junction endodeoxyribonuclease RuvC (173 aa).

Residues aspartate 8, glutamate 67, and aspartate 139 contribute to the active site. Aspartate 8, glutamate 67, and aspartate 139 together coordinate Mg(2+).

The protein belongs to the RuvC family. In terms of assembly, homodimer which binds Holliday junction (HJ) DNA. The HJ becomes 2-fold symmetrical on binding to RuvC with unstacked arms; it has a different conformation from HJ DNA in complex with RuvA. In the full resolvosome a probable DNA-RuvA(4)-RuvB(12)-RuvC(2) complex forms which resolves the HJ. Mg(2+) is required as a cofactor.

The protein localises to the cytoplasm. The catalysed reaction is Endonucleolytic cleavage at a junction such as a reciprocal single-stranded crossover between two homologous DNA duplexes (Holliday junction).. In terms of biological role, the RuvA-RuvB-RuvC complex processes Holliday junction (HJ) DNA during genetic recombination and DNA repair. Endonuclease that resolves HJ intermediates. Cleaves cruciform DNA by making single-stranded nicks across the HJ at symmetrical positions within the homologous arms, yielding a 5'-phosphate and a 3'-hydroxyl group; requires a central core of homology in the junction. The consensus cleavage sequence is 5'-(A/T)TT(C/G)-3'. Cleavage occurs on the 3'-side of the TT dinucleotide at the point of strand exchange. HJ branch migration catalyzed by RuvA-RuvB allows RuvC to scan DNA until it finds its consensus sequence, where it cleaves and resolves the cruciform DNA. The protein is Crossover junction endodeoxyribonuclease RuvC of Pectobacterium carotovorum subsp. carotovorum (strain PC1).